Reading from the N-terminus, the 181-residue chain is Ribosome maturation factor RimM (181 aa).

Positions 98–177 (EGEFFYCDLI…KITTHNAKTL (80 aa)) constitute a PRC barrel domain.

It belongs to the RimM family. As to quaternary structure, binds ribosomal protein uS19.

It is found in the cytoplasm. Its function is as follows. An accessory protein needed during the final step in the assembly of 30S ribosomal subunit, possibly for assembly of the head region. Essential for efficient processing of 16S rRNA. May be needed both before and after RbfA during the maturation of 16S rRNA. It has affinity for free ribosomal 30S subunits but not for 70S ribosomes. The protein is Ribosome maturation factor RimM of Helicobacter pylori (strain J99 / ATCC 700824) (Campylobacter pylori J99).